Reading from the N-terminus, the 484-residue chain is Glutamyl-tRNA(Gln) amidotransferase subunit A (484 aa).

Active-site charge relay system residues include Lys-76 and Ser-151. Ser-175 serves as the catalytic Acyl-ester intermediate.

It belongs to the amidase family. GatA subfamily. In terms of assembly, heterotrimer of A, B and C subunits.

It carries out the reaction L-glutamyl-tRNA(Gln) + L-glutamine + ATP + H2O = L-glutaminyl-tRNA(Gln) + L-glutamate + ADP + phosphate + H(+). Its function is as follows. Allows the formation of correctly charged Gln-tRNA(Gln) through the transamidation of misacylated Glu-tRNA(Gln) in organisms which lack glutaminyl-tRNA synthetase. The reaction takes place in the presence of glutamine and ATP through an activated gamma-phospho-Glu-tRNA(Gln). This is Glutamyl-tRNA(Gln) amidotransferase subunit A from Cellvibrio japonicus (strain Ueda107) (Pseudomonas fluorescens subsp. cellulosa).